Here is a 2187-residue protein sequence, read N- to C-terminus: MATTEMNDVQPVQSQVLLFGDLSLAHVEESLKRLLHVKTNPLLAAFFQRVNHQLRRLLDGLPLEQQDFFPRFTTLIDLVSRLGETSGTPVLAFFLLSVQQVAQSIVYFSHGSRIFPPSSACIIGPCTGGFAAAALASSQNLVDLVNNGAEASILAFRTALVSFLISRSLSNSPQTEGSTSWSVAVSSRGEQTVEDLAQEYMAAKTPLRHSSLWKSAVTASLTITLSGQPSILQGFLETYSEQLRYKYLDIDSPYHAAHLFSETDVEQIVSHLAGSDTADQKPRLPVLSSATGQLISASTFHGLLHTVVQETLLKPVCWDLILDSCQSWLTQGGAQECTILPFSSNAGTMIASALTKEKEIEVTVADATGSGLLDEKPTGRFEHSKIAIVGYSGRFPSAASNDAFWELLRSGQDVHREVPRDRFEWEKYYDPTGKKKNTSRVKYGCWIDEPGVFDTRFFNMSPKEAENTDPAQRLAITTTYEAMEMAGMVRNRTASTQQDRIGVFFGTTSDDWREVNSGQDVGTYFIPGGNRAFVPGRISYFFRFSGPSLSIDTACSSSFAAIQAACSYLWRGECDAAIAGGTNVLTSPDNFAGLDRAHFLSTTGNCNAFDDEASGYCRSDAVGSVVLKRLEDAEADNDPIFGVILGTNTNHCGQTESITRPHEGDQISVFKNIIRHSGIDPTDVSYIEMHGTGTQAGDATEMNSVLSAFVPKYKRTEMSPQRPLFIGSAKANIGHAESASGVSSLIKVMEMMKHNEIPPHCGIKNRINHNYPLDLAQRGVNIAFEVKPWLRENSNGGKRRVFLNNFSAAGGNTAMLIEDAPLPKSIAHLTDPRSTHLVSVSAKSPKSLLANIKSILASLDMRATPPSVAALSYTTTARRTQHNYRVIVSGSDLDSVKSSLRSWTQENESTISDFKPIPSSAKKQARVAFAFTGQGTLYTAIGAQLFAVNETFKINIHKLNRLAEIQGFPSFIGLIDGTITAEELPNVSPVVTQLALVCVQVALYELWSSWGLNPAAVIGHSLGEYPALYAAGVLSSADMIYLVATRATLLEKLCTRGTHSMLAVKASEDVAEKLIRDATASPECEIACANQPAGHVIAGPVGKIDEVAQKAAESGVEVVKLNVPYAFHSPQVEPILVDFLESASQGVTYNAPTIPVLSPFHGRVVAAGETGVLNAEYLVAACRGQVNFKQALSSAGELTDADRTLWLEIGAHPACGGMVKGTIDSRVKTIASLRQNVDAYQTLTTGLKTLYLAGIDINWNEYHRHFPASHQMVKLPMYAWDLKNYWIQYKNDFLLYKGGDFPQQIAAAPTPVPVVRKYLSPCAQQIVEEFHDSQQSTMVVESDIFDPKLLPVLQGHLVNGAALCPSSMYADLAYTVADYLIRHCPTQIPDTTGLDVTNVKVSNPLIAKGNETTHLFRASVKADWPANRVSIDLFSVGANGKRTASHAKLDVVLYPGQQWLKEWKRNAHFITSRIKGLNAAIHSSSTETHLIKRGMAYKLFASLVDYKKEYQGMSEIVIDSHELEAVSTVQFQVGKEEFFLNPRWIDSLGGVAGFIMNANDGVCSKDQVFINHGWERMRIAEPFDEKKTYHAYNRMQLVENTTYAGDTYIMDGDRVIAIFEGVVFQGVPRRALDHLLPNAAAKSAAATKAPAKAPVAAVAPPRTPTKAAPQSRQAAPKQKRSPVSDVFNRILGLISEEVGVSLSDLVGDADFASLGVDSLLSLTITAKIRDEMGLDFPSSLFVDEPTVADLRTLLSNSDEDDTPSGDSSTYEDSESQITSPASSVGPETPGGGEFGSSESARVALVVRQAICEETQVAMEELKSFTCLSDIGVDSLLGLTLSSRLQDLLQVDIPGNMLMDFETVHDLEEEIYNVMGLEKPQKKASGPTQVPLAVPQPLAVPAVTSISSLPQATSILLSGSIKTAQTILFLFPDGSGSASSYAHVARAVAPSTFAVYGLNCPWRKTARDMTRLGITMSSMVAQYLPEVQRMIQKVRSEGNSTATIALGGWSAGGILAFEAIRQMGASTPISHLVLFDSPNPIGLQNPPQRMFDFFDGLGIFGPPPGKNGEKAKTPEWLLDHFNAFISILDDYEPSPLPNAPASLMIYAKDGVCKDPNGPQMDIRPDDPREMIWLLNNRTDFTADGWASIIGREKLSITVLDEVNHFSLMDPGPKMPEMGEAVAEFLGRN.

Residues 17–255 (LLFGDLSLAH…KYLDIDSPYH (239 aa)) are N-terminal acylcarrier protein transacylase domain (SAT). Residues 383-819 (HSKIAIVGYS…GGNTAMLIED (437 aa)) form the Ketosynthase family 3 (KS3) domain. Active-site for beta-ketoacyl synthase activity residues include C555, H690, and H735. The interval 926–1226 (RVAFAFTGQG…GMVKGTIDSR (301 aa)) is malonyl-CoA:ACP transacylase (MAT) domain. The active-site For acyl/malonyl transferase activity is S1021. Positions 1321–1637 (PCAQQIVEEF…PRRALDHLLP (317 aa)) are product template (PT) domain. The interval 1324-1458 (QQIVEEFHDS…LDVVLYPGQQ (135 aa)) is N-terminal hotdog fold. Positions 1324–1633 (QQIVEEFHDS…FQGVPRRALD (310 aa)) constitute a PKS/mFAS DH domain. Catalysis depends on H1356, which acts as the Proton acceptor; for dehydratase activity. The segment at 1486 to 1633 (TETHLIKRGM…FQGVPRRALD (148 aa)) is C-terminal hotdog fold. D1546 acts as the Proton donor; for dehydratase activity in catalysis. Residues 1652–1669 (KAPVAAVAPPRTPTKAAP) show a composition bias toward low complexity. Positions 1652 to 1681 (KAPVAAVAPPRTPTKAAPQSRQAAPKQKRS) are disordered. Carrier domains are found at residues 1684–1758 (SDVF…SNSD) and 1796–1874 (SSES…YNVM). The residue at position 1718 (S1718) is an O-(pantetheine 4'-phosphoryl)serine. Positions 1754-1796 (LSNSDEDDTPSGDSSTYEDSESQITSPASSVGPETPGGGEFGS) are disordered. A compositionally biased stretch (acidic residues) spans 1757–1774 (SDEDDTPSGDSSTYEDSE). An O-(pantetheine 4'-phosphoryl)serine modification is found at S1834. The thioesterase (TE) domain stretch occupies residues 1906-2183 (SSLPQATSIL…PEMGEAVAEF (278 aa)). The active-site For thioesterase activity is S2009.

It catalyses the reaction 6 malonyl-CoA + acetyl-CoA + 5 H(+) = 3,6,7,9-tetrahydroxy-3-methyl-2,3-dihydro-1H-naphtho[2,1-b]pyran-1-one + 6 CO2 + 7 CoA + H2O. Its pathway is secondary metabolite biosynthesis. In terms of biological role, non-reducing polyketide synthase; part of the gene cluster that mediates the biosynthesis of phenalenones such as herqueinone, compounds that have been reported to treat tumors, bacterial infections and/or mycoses, and rheumatic diseases. The non-reducing polyketide synthase phnA synthesizes the heptaketide backbone and cyclizes it into the angular, hemiketal-containing naphtho-gamma-pyrone prephenalenone. The product template (PT) domain of phnA catalyzes only the C4-C9 aldol condensation, which is unprecedented among known PT domains. The transformation of prephenalenone to phenalenones requires an FAD-dependent monooxygenase phnB, which catalyzes the C2 aromatic hydroxylation of prephenalenone and ring opening of the gamma-pyrone ring simultaneously. Subsequent intramolecular deprotonation of C3 phenolic oxygen accelerates phenalenone ring closure to yield the tricyclic phenalenone core with a C2 hydroxylation. The prenyltransferase phnF further catalyzes reverse C-prenylation of phenalenone by direct electrophilic substitution at C6, or possibly via first a forward O-prenylation of a neighboring phenol in phenalenone, followed by a Claisen rearrangement. The hydroalkoxylation enzyme phnH catalyzes the 5-exo-trig cyclization via acid catalysis after the spontaneous deprotonation of 7-OH, which leads to the formation of the dihydrobenzofuran atrovenetin. Atrovenetin is further converted to deoxyherqueinone by the O-methyltransferase phnC which can methylate C2-OH to stabilize the northern portion of the phenalenone core. Finally, the oxidoreductase phnG converts deoxyherqueinone to herqueinone via C6 hydroxylation. The polypeptide is Non-reducing polyketide synthase phnA (Penicillium herquei).